Here is a 313-residue protein sequence, read N- to C-terminus: MPKAKSAASSRRRDRQEQRRELKRAGGLMFNTGIGQHILKNPLIVNSIIDKAALRPTDVVLEVGPGTGNMTVKLLEKAKKVVACELDPRLVAELHKRVQGTPLASKLQVLVGDVLKSDLPFFDACVANLPYQISSPFVFKLLLHRPFFRCAILMFQREFALRLVAKPGDKLYCRLSINTQLLARVDHLMKVGKNNFRPPPKVESSVVRIEPKNPPPPINFQEWDGLVRITFVRKNKTLSAAFKSSAVQQLLEKNYRIHCSVQNTVIPEDFSIADKIQQILTSTGFSDKRARSMDIDDFIRLLHGFNAEGIHFS.

Residues His-37, Leu-39, Gly-64, Glu-85, Asp-113, and Asn-128 each contribute to the S-adenosyl-L-methionine site.

Belongs to the class I-like SAM-binding methyltransferase superfamily. rRNA adenine N(6)-methyltransferase family. In terms of assembly, part of the small subunit (SSU) processome, composed of more than 70 proteins and the RNA chaperone small nucleolar RNA (snoRNA) U3.

It is found in the nucleus. The protein resides in the nucleoplasm. The protein localises to the nucleolus. It catalyses the reaction adenosine(1779)/adenosine(1780) in 18S rRNA + 4 S-adenosyl-L-methionine = N(6)-dimethyladenosine(1779)/N(6)-dimethyladenosine(1780) in 18S rRNA + 4 S-adenosyl-L-homocysteine + 4 H(+). Functionally, specifically dimethylates two adjacent adenosines in the loop of a conserved hairpin near the 3'-end of 18S rRNA in the 40S particle. Involved in the pre-rRNA processing steps leading to small-subunit rRNA production independently of its RNA-modifying catalytic activity. Part of the small subunit (SSU) processome, first precursor of the small eukaryotic ribosomal subunit. During the assembly of the SSU processome in the nucleolus, many ribosome biogenesis factors, an RNA chaperone and ribosomal proteins associate with the nascent pre-rRNA and work in concert to generate RNA folding, modifications, rearrangements and cleavage as well as targeted degradation of pre-ribosomal RNA by the RNA exosome. The chain is Dimethyladenosine transferase (Dimt1) from Mus musculus (Mouse).